We begin with the raw amino-acid sequence, 190 residues long: Potassium-transporting ATPase KdpC subunit (190 aa).

Residues 6-26 form a helical membrane-spanning segment; it reads PAVFLVLLLTLITGLLYPLLT. Positions 67-88 are disordered; sequence GRPSATSDRPYNPLASSGSNLA. Positions 69–88 are enriched in polar residues; sequence PSATSDRPYNPLASSGSNLA.

Belongs to the KdpC family. In terms of assembly, the system is composed of three essential subunits: KdpA, KdpB and KdpC.

The protein resides in the cell inner membrane. Functionally, part of the high-affinity ATP-driven potassium transport (or Kdp) system, which catalyzes the hydrolysis of ATP coupled with the electrogenic transport of potassium into the cytoplasm. This subunit acts as a catalytic chaperone that increases the ATP-binding affinity of the ATP-hydrolyzing subunit KdpB by the formation of a transient KdpB/KdpC/ATP ternary complex. In Erwinia tasmaniensis (strain DSM 17950 / CFBP 7177 / CIP 109463 / NCPPB 4357 / Et1/99), this protein is Potassium-transporting ATPase KdpC subunit.